The primary structure comprises 149 residues: Small ribosomal subunit protein uS9 (149 aa).

This sequence belongs to the universal ribosomal protein uS9 family.

It is found in the cytoplasm. This chain is Small ribosomal subunit protein uS9 (RPS16A), found in Oryza sativa subsp. indica (Rice).